The primary structure comprises 585 residues: Urease subunit alpha (585 aa).

Residues 132 to 585 enclose the Urease domain; the sequence is GGIDTHIHFI…LPMAQRYFLF (454 aa). Ni(2+)-binding residues include His137, His139, and Lys220. An N6-carboxylysine modification is found at Lys220. A substrate-binding site is contributed by His222. Residues His249 and His275 each coordinate Ni(2+). The Proton donor role is filled by His323. Ni(2+) is bound at residue Asp363.

Belongs to the metallo-dependent hydrolases superfamily. Urease alpha subunit family. In terms of assembly, heterotrimer of UreA (gamma), UreB (beta) and UreC (alpha) subunits. Three heterotrimers associate to form the active enzyme. Requires Ni cation as cofactor. Post-translationally, carboxylation allows a single lysine to coordinate two nickel ions.

It localises to the cytoplasm. It catalyses the reaction urea + 2 H2O + H(+) = hydrogencarbonate + 2 NH4(+). It participates in nitrogen metabolism; urea degradation; CO(2) and NH(3) from urea (urease route): step 1/1. This chain is Urease subunit alpha, found in Pseudarthrobacter chlorophenolicus (strain ATCC 700700 / DSM 12829 / CIP 107037 / JCM 12360 / KCTC 9906 / NCIMB 13794 / A6) (Arthrobacter chlorophenolicus).